A 962-amino-acid polypeptide reads, in one-letter code: Putative RNA Helicase B962L (962 aa).

In terms of domain architecture, Helicase ATP-binding spans 43 to 229; the sequence is IPTSLADRVL…FGIGKENIIL (187 aa). Position 56–63 (56–63) interacts with ATP; it reads SRTGSGKS. The short motif at 167-170 is the DEAH box element; it reads DEAH. The Helicase C-terminal domain occupies 253-459; the sequence is ACETALTIHK…TIKKNKEGVF (207 aa). The helical transmembrane segment at 521-541 threads the bilayer; that stretch reads GYFWQAAISDIATILAVVSVA.

It belongs to the DEAD box helicase family. DEAH subfamily.

It localises to the host membrane. The protein localises to the virion. It catalyses the reaction ATP + H2O = ADP + phosphate + H(+). This African swine fever virus (isolate Warthog/Namibia/Wart80/1980) (ASFV) protein is Putative RNA Helicase B962L.